The following is a 467-amino-acid chain: MDTNGIKLTPKDIVSKLNEYIVGQNDAKRKVAIALRNRYRRSLLKEEEKQEIAPKNILMIGPTGVGKTEIARRMAKIVGAPFIKVEATKFTEVGYVGRDVESMVRDLVDVAVRLVKDEKKSLVKDEATKKANDKLVKLLVPSLKKKAAQGNNPLENLFGGAIPNFGQNQDEEEEPPTEEIKTKRSEIKKQLEQGKLENEKVRIKVEQDPASMGMLGTNQNQQIQDMMNQLMPKKKVEREVSVETARKILADDFADELIDQETANQQALELAEQMGIIFIDEIDKVATNNQNSGQDVSRQGVQRDILPILEGSMIQTKYGTVNTEHMLFIGAGAFHVSKPSDLIPELQGRFPIRVELESLSVEDFVRILTEPKLSLVKQYEALLQTEEVTVNFSEDAIQRLAEIAYQVNQDTDNIGARRLHTILEKMLEDLSFEAPSMPNAVVDITPQYVDDKLKSISTNKDLSAFIL.

ATP-binding positions include Val-22 and 64–69 (GVGKTE). The tract at residues 166-185 (GQNQDEEEEPPTEEIKTKRS) is disordered. Asp-280, Glu-345, and Arg-417 together coordinate ATP.

The protein belongs to the ClpX chaperone family. HslU subfamily. A double ring-shaped homohexamer of HslV is capped on each side by a ring-shaped HslU homohexamer. The assembly of the HslU/HslV complex is dependent on binding of ATP.

It is found in the cytoplasm. ATPase subunit of a proteasome-like degradation complex; this subunit has chaperone activity. The binding of ATP and its subsequent hydrolysis by HslU are essential for unfolding of protein substrates subsequently hydrolyzed by HslV. HslU recognizes the N-terminal part of its protein substrates and unfolds these before they are guided to HslV for hydrolysis. The protein is ATP-dependent protease ATPase subunit HslU of Staphylococcus epidermidis (strain ATCC 35984 / DSM 28319 / BCRC 17069 / CCUG 31568 / BM 3577 / RP62A).